The following is a 69-amino-acid chain: Proteinase inhibitor (69 aa).

Residue S1 is modified to N-acetylserine. C4 and C49 are disulfide-bonded.

In terms of biological role, in vitro, strong inhibitor of bovine beta-trypsin, weak inhibitor of alpha-chymotrypsin, subtilisin BPN', subtilisin Carlsberg and cathepsin G. The sequence is that of Proteinase inhibitor from Linum usitatissimum (Flax).